The chain runs to 435 residues: Indole diterpene prenyltransferase atmD (435 aa).

Residues 81–82 (AY) and Glu90 each bind L-tryptophan. Residues Arg103, Lys190, Arg261, Lys263, Tyr265, Tyr346, and Tyr413 each contribute to the substrate site.

It belongs to the tryptophan dimethylallyltransferase family.

Its function is as follows. Indole diterpene prenyltransferase; part of the ATM2 gene cluster that mediates the biosynthesis of aflatrem, a tremorgenic mycotoxin with acute neurotoxic effects. Synthesis of geranylgeranyl diphosphate (GGPP) by AtmG (a GGPP synthase) precedes condensation of GGPP with indole 3-glycerol phosphate, followed by epoxidation and cyclization by AtmM (a FAD-dependent monooxygenase) and AtmC (a prenyltransferase) to produce paspaline. AtmB is also essential for paspaline production, but its exact role has not been identified yet. AtmP, a cytochrome P450 monooxygenase, subsequently converts paspaline to 13-desoxypaxilline via PC-M6 by removal of the C-30 methyl group and oxidation at C-10. AtmQ, a cytochrome P450 monooxygenase, then catalyzes the oxidation of 13-desoxypaxilline, first at C-7 to produce paspalicine and then at C-13 to form paspalinine. Finally, AtmD prenylates paspalinine to form aflatrem. This is Indole diterpene prenyltransferase atmD from Aspergillus flavus.